The following is a 364-amino-acid chain: DNA polymerase IV (364 aa).

In terms of domain architecture, UmuC spans 6–186 (IIHIDMDAFY…LPIESFWGVG (181 aa)). The Mg(2+) site is built by D10 and D104. E105 is an active-site residue.

Belongs to the DNA polymerase type-Y family. Monomer. It depends on Mg(2+) as a cofactor.

It is found in the cytoplasm. It catalyses the reaction DNA(n) + a 2'-deoxyribonucleoside 5'-triphosphate = DNA(n+1) + diphosphate. In terms of biological role, poorly processive, error-prone DNA polymerase involved in untargeted mutagenesis. Copies undamaged DNA at stalled replication forks, which arise in vivo from mismatched or misaligned primer ends. These misaligned primers can be extended by PolIV. Exhibits no 3'-5' exonuclease (proofreading) activity. May be involved in translesional synthesis, in conjunction with the beta clamp from PolIII. The protein is DNA polymerase IV of Bacteroides fragilis (strain YCH46).